We begin with the raw amino-acid sequence, 639 residues long: Versicolorin B synthase stcN (639 aa).

Positions 1–19 are cleaved as a signal peptide; that stretch reads MPAWSLLVLSALPVVGMFA. Residues 77–78 and 98–99 each bind FAD; these read TA and EA. Asn-109 carries N-linked (GlcNAc...) asparagine glycosylation. FAD is bound at residue 164–167; that stretch reads GAML. Asn-214 carries N-linked (GlcNAc...) asparagine glycosylation. The PAS domain occupies 263-301; sequence GFSNGQLLGRSYITHTIHPKTRRRDTASTSYLQTALRTS. N-linked (GlcNAc...) asparagine glycans are attached at residues Asn-444 and Asn-501. Residues Ala-609 and 620–621 each bind FAD; that span reads PM.

It belongs to the GMC oxidoreductase family. As to quaternary structure, homodimer. FAD serves as cofactor.

It localises to the cytoplasm. The protein resides in the cytosol. It carries out the reaction (2S-3S)-versiconal hemiacetal = versicolorin B + H2O. It catalyses the reaction (S)-5'-oxoaverantin + H(+) = (1'S,5'S)-averufin + H2O. It functions in the pathway mycotoxin biosynthesis; sterigmatocystin biosynthesis. In terms of biological role, norsolorinic acid reductase; part of the gene cluster that mediates the biosynthesis of sterigmatocystin (ST), a polyketide-derived furanocoumarin which is part of the most toxic and carcinogenic compounds among the known mycotoxins. The first step in the biosynthesis of sterigmatocystin is the production of hexanoate by the fatty acid synthase (FAS) units stcJ and stcK. The polyketide backbone is assembled by the non-reducing polyketide synthase stcA by condensation of the starter hexanoyl-CoA and 7 malonyl-CoA extender units followed by cyclization and release of norsolorinic acid. Norsolorinic acid is the first stable intermediate in the biosynthesis of sterigmatocystin and is converted into averantin (AVN) by the ketoreductase stcE which reduces the hexanoate ketone to an alcohol. Averantin is then oxidized into 5'-hydroxyaverantin (HAVN) by the cytochrome P450 monooxygenase stcF. 5'-hydroxyaverantin is further converted to 5'-oxyaverantin (OAVN) by the 5'-hydroxyaverantin dehydrogenase stcG. The next step is the conversion of OAVN into averufin (AVF) which is catalyzed by a yet to be identified enzyme. The cytochrome P450 monooxygenase stcB and the flavin-binding monooxygenase stcW are both required for the conversion of averufin to 1-hydroxyversicolorone. The esterase stcI probably catalyzes the formation of versiconal hemiacetal acetate from 1-hydroxyversicolorone. The oxydoreductase stcN then probably catalyzes the biosynthetic step from versiconal to versicolorin B (VERB). The next step is performed by the versicolorin B desaturase stcL to produce versicolorin A (VERA). The ketoreductase stcU and the cytochrome P450 monooxygenase stcS are involved in the conversion of versicolorin A to demethylsterigmatocystin. The Baeyer-Villiger oxidas stcQ and the reductase stcR might be involved in the biosynthetic step from versicolorin A to demethylsterigmatocystin. The final step in the biosynthesis of sterigmatocystin is the methylation of demethylsterigmatocystin catalyzed by the methyltransferase stcP. In Emericella nidulans (strain FGSC A4 / ATCC 38163 / CBS 112.46 / NRRL 194 / M139) (Aspergillus nidulans), this protein is Versicolorin B synthase stcN.